The primary structure comprises 656 residues: Phosphoprotein 85 (656 aa).

Disordered stretches follow at residues 1–174 (MSSR…EGDE) and 615–656 (NGNH…EYCC). The span at 46–55 (SATEDLDRME) shows a compositional bias: basic and acidic residues. Composition is skewed to low complexity over residues 59–70 (SPYSVSSDAPSS) and 140–160 (DNSS…RSTS). Positions 625–634 (SPPPPLPPRD) are enriched in pro residues. Residues 635–656 (YPQRDERDRHRRDRRDSGEYCC) show a composition bias toward basic and acidic residues.

The protein belongs to the herpesviridae pp85 family. In terms of processing, phosphorylated.

It localises to the virion tegument. It is found in the host cytoplasm. The chain is Phosphoprotein 85 (UL25) from Homo sapiens (Human).